Consider the following 512-residue polypeptide: Putative ribose/galactose/methyl galactoside import ATP-binding protein 1 (512 aa).

ABC transporter domains follow at residues 14-251 (IALT…VGRQ) and 262-507 (TSAN…TQRE). 46 to 53 (GENGAGKS) contacts ATP.

Belongs to the ABC transporter superfamily. Carbohydrate importer 2 (CUT2) (TC 3.A.1.2) family.

Its subcellular location is the cell inner membrane. It carries out the reaction D-ribose(out) + ATP + H2O = D-ribose(in) + ADP + phosphate + H(+). The catalysed reaction is D-galactose(out) + ATP + H2O = D-galactose(in) + ADP + phosphate + H(+). Part of an ABC transporter complex involved in carbohydrate import. Could be involved in ribose, galactose and/or methyl galactoside import. Responsible for energy coupling to the transport system. This Burkholderia lata (strain ATCC 17760 / DSM 23089 / LMG 22485 / NCIMB 9086 / R18194 / 383) protein is Putative ribose/galactose/methyl galactoside import ATP-binding protein 1.